Reading from the N-terminus, the 118-residue chain is Diacylglycerol kinase (118 aa).

Glu28 is a binding site for a divalent metal cation. Transmembrane regions (helical) follow at residues 29-49 and 55-75; these read TAFRHECFLACILIPLTFFLG and IILMISSVLLVMALELLNSAV. Glu69 acts as the Proton acceptor in catalysis. Position 76 (Glu76) interacts with a divalent metal cation. The chain crosses the membrane as a helical span at residues 98–118; it reads SASVFIALCIVGIVWGGILFF.

This sequence belongs to the bacterial diacylglycerol kinase family. Mg(2+) serves as cofactor.

The protein resides in the cell inner membrane. The enzyme catalyses a 1,2-diacyl-sn-glycerol + ATP = a 1,2-diacyl-sn-glycero-3-phosphate + ADP + H(+). Its function is as follows. Catalyzes the ATP-dependent phosphorylation of sn-l,2-diacylglycerol (DAG) to phosphatidic acid. Involved in the recycling of diacylglycerol produced as a by-product during membrane-derived oligosaccharide (MDO) biosynthesis. The protein is Diacylglycerol kinase (dgkA) of Haemophilus influenzae (strain ATCC 51907 / DSM 11121 / KW20 / Rd).